A 201-amino-acid chain; its full sequence is Sterile alpha motif domain-containing protein 12 (201 aa).

One can recognise an SAM domain in the interval 77–143 (WTQQDVCKWL…LQQVLQLKVR (67 aa)).

This Pongo abelii (Sumatran orangutan) protein is Sterile alpha motif domain-containing protein 12 (SAMD12).